Reading from the N-terminus, the 510-residue chain is Protein phosphatase 1H (510 aa).

The PPM-type phosphatase domain occupies 73–503; the sequence is STGYAEVINA…DDISVYVIPL (431 aa). 2 disordered regions span residues 105-128 and 188-225; these read VQST…EGLQ and LGEE…PTRF.

The protein belongs to the PP2C family.

The protein localises to the nucleus. It localises to the cytoplasm. The enzyme catalyses O-phospho-L-seryl-[protein] + H2O = L-seryl-[protein] + phosphate. It carries out the reaction O-phospho-L-threonyl-[protein] + H2O = L-threonyl-[protein] + phosphate. This is Protein phosphatase 1H (ppm1h) from Xenopus tropicalis (Western clawed frog).